Reading from the N-terminus, the 519-residue chain is Cysteine--tRNA ligase (519 aa).

Residue Cys-30 participates in Zn(2+) binding. Positions Pro-32 to Asn-42 match the 'HIGH' region motif. Cys-221, His-253, and Glu-257 together coordinate Zn(2+). The 'KMSKS' region motif lies at Lys-286 to Ser-290. Lys-289 is a binding site for ATP.

It belongs to the class-I aminoacyl-tRNA synthetase family. As to quaternary structure, monomer. Zn(2+) is required as a cofactor.

The protein localises to the cytoplasm. It catalyses the reaction tRNA(Cys) + L-cysteine + ATP = L-cysteinyl-tRNA(Cys) + AMP + diphosphate. The polypeptide is Cysteine--tRNA ligase (Cereibacter sphaeroides (strain KD131 / KCTC 12085) (Rhodobacter sphaeroides)).